The primary structure comprises 254 residues: 3-deoxy-manno-octulosonate cytidylyltransferase (254 aa).

The protein belongs to the KdsB family.

It localises to the cytoplasm. The catalysed reaction is 3-deoxy-alpha-D-manno-oct-2-ulosonate + CTP = CMP-3-deoxy-beta-D-manno-octulosonate + diphosphate. Its pathway is nucleotide-sugar biosynthesis; CMP-3-deoxy-D-manno-octulosonate biosynthesis; CMP-3-deoxy-D-manno-octulosonate from 3-deoxy-D-manno-octulosonate and CTP: step 1/1. It functions in the pathway bacterial outer membrane biogenesis; lipopolysaccharide biosynthesis. In terms of biological role, activates KDO (a required 8-carbon sugar) for incorporation into bacterial lipopolysaccharide in Gram-negative bacteria. This is 3-deoxy-manno-octulosonate cytidylyltransferase from Pseudomonas putida (strain W619).